Reading from the N-terminus, the 102-residue chain is COX assembly mitochondrial protein 2 homolog (102 aa).

A CHCH domain is found at Thr11–Arg55. Short sequence motifs (cx9C motif) lie at residues Cys14–Cys24 and Cys37–Cys47. Disulfide bonds link Cys14/Cys47 and Cys24/Cys37.

Belongs to the CMC family.

The protein localises to the mitochondrion. May be involved in cytochrome c oxidase biogenesis. The protein is COX assembly mitochondrial protein 2 homolog of Caenorhabditis elegans.